A 505-amino-acid chain; its full sequence is Catalase (505 aa).

A disordered region spans residues Met1–Ala25. Catalysis depends on residues His56 and Asn129. Tyr339 contributes to the heme binding site.

This sequence belongs to the catalase family. Homodimer. Heme serves as cofactor.

It catalyses the reaction 2 H2O2 = O2 + 2 H2O. Functionally, decomposes hydrogen peroxide into water and oxygen; serves to protect cells from the toxic effects of hydrogen peroxide. The protein is Catalase (katA) of Staphylococcus aureus (strain MSSA476).